The sequence spans 361 residues: Phenylalanine--tRNA ligase alpha subunit (361 aa).

Glu260 is a binding site for Mg(2+).

The protein belongs to the class-II aminoacyl-tRNA synthetase family. Phe-tRNA synthetase alpha subunit type 1 subfamily. Tetramer of two alpha and two beta subunits. Requires Mg(2+) as cofactor.

It localises to the cytoplasm. It catalyses the reaction tRNA(Phe) + L-phenylalanine + ATP = L-phenylalanyl-tRNA(Phe) + AMP + diphosphate + H(+). In Bartonella bacilliformis (strain ATCC 35685 / KC583 / Herrer 020/F12,63), this protein is Phenylalanine--tRNA ligase alpha subunit.